We begin with the raw amino-acid sequence, 251 residues long: DNA-directed RNA polymerase III subunit RPC7 (251 aa).

Residues 186-251 (DDASTGDGAA…EEDPNEEAAF (66 aa)) are disordered. The residue at position 189 (serine 189) is a Phosphoserine. 2 stretches are compositionally biased toward acidic residues: residues 203-225 (GEDD…DDDY) and 234-251 (GDDD…EAAF).

Belongs to the eukaryotic RPC7 RNA polymerase subunit family. In terms of assembly, component of the RNA polymerase III (Pol III) complex consisting of 17 subunits.

It is found in the nucleus. Functionally, DNA-dependent RNA polymerase catalyzes the transcription of DNA into RNA using the four ribonucleoside triphosphates as substrates. Specific peripheric component of RNA polymerase III which synthesizes small RNAs, such as 5S rRNA and tRNAs. C31 is involved in the formation of the initiation complex. The protein is DNA-directed RNA polymerase III subunit RPC7 (RPC31) of Saccharomyces cerevisiae (strain ATCC 204508 / S288c) (Baker's yeast).